Here is a 342-residue protein sequence, read N- to C-terminus: Serpentine receptor class gamma-69 (342 aa).

Transmembrane regions (helical) follow at residues 11 to 31 (MAGLIGIYAFQGFYGLLSVVV), 51 to 71 (SLLYTCCAALSLTYFLDHFLI), 106 to 126 (PIAILVFHALIAAHRFSIVAA), 140 to 160 (LFVLVGFLIPLIFMWFMIPCK), 191 to 211 (IAAVLFGVLTLCLTFGMLIAL), 222 to 242 (AEISLIVFEVFMTVFTLIYAF), and 269 to 289 (FAIDIFILPQAWTLLFLSTTV).

The protein belongs to the nematode receptor-like protein srg family.

It is found in the membrane. The protein is Serpentine receptor class gamma-69 (srg-69) of Caenorhabditis elegans.